Reading from the N-terminus, the 594-residue chain is SHC-transforming protein 3 (594 aa).

The disordered stretch occupies residues 98-147 (GSCSAPSLAAPDGSAPSAPRAPAMSAARKGRPGDEPLPRPPRGAPHASDQ). Residues 101–124 (SAPSLAAPDGSAPSAPRAPAMSAA) are compositionally biased toward low complexity. The region spanning 149-334 (LGPGVTYVVK…LDEPWTEEEG (186 aa)) is the PID domain. The segment at 335–498 (DGSDHPYYNS…KMLEELQAET (164 aa)) is CH1. 2 disordered regions span residues 351–373 (PPGG…AQFA) and 386–405 (GDTF…SSDI). A compositionally biased stretch (polar residues) spans 393–405 (WQQTPLRQGSSDI). S402 carries the phosphoserine modification. The 92-residue stretch at 499–590 (WYQGEMSRKE…GSELCLQQPV (92 aa)) folds into the SH2 domain.

Interacts with the Trk receptors in a phosphotyrosine-dependent manner. Once activated, binds to GRB2. Interacts with activated EGF receptors. Tyrosine phosphorylated. As to expression, mainly expressed in brain. Hardly detectable in other tissues, except in pancreas. Highly expressed in the cerebral cortex, frontal and temporal lobes, occipital pole, hippocampus, caudate nucleus and amygdala. Expressed at low level in the cerebellum, medulla and spinal cord.

Its function is as follows. Signaling adapter that couples activated growth factor receptors to signaling pathway in neurons. Involved in the signal transduction pathways of neurotrophin-activated Trk receptors in cortical neurons. The sequence is that of SHC-transforming protein 3 (SHC3) from Homo sapiens (Human).